Here is a 583-residue protein sequence, read N- to C-terminus: Hyaluronan synthase-related protein (583 aa).

Residues 1–29 (MENTTDPENIPVSKPKYPTIRRILSQTFR) lie on the Cytoplasmic side of the membrane. Residues 30 to 50 (ILLLFSITTAYVLGYQALCHQ) form a helical membrane-spanning segment. Topologically, residues 51–52 (GL) are extracellular. A helical membrane pass occupies residues 53-73 (LITFGLYGAAMLLHLLMQGIF). Residues 74–393 (ANLEIRRIEK…CNAQWWHQHH (320 aa)) are Cytoplasmic-facing. The helical transmembrane segment at 394–414 (IWMTYESATGIFFPFFVTAVL) threads the bilayer. Topologically, residues 415-425 (IRLMYSSSLCN) are extracellular. A helical membrane pass occupies residues 426–446 (IVWLFLCIQIMSLLLSLYASW). Residues 447–457 (QSKKLSMVLMS) lie on the Cytoplasmic side of the membrane. A helical membrane pass occupies residues 458 to 478 (LYSTLYIIWLLPCQLVALLTI). Residues 479-497 (AKSDWGTSGRKKVVNNYVP) lie on the Extracellular side of the membrane. A helical transmembrane segment spans residues 498–518 (LFSLSIWAAVLLGGLCYSMYI). Residues 519-535 (GCRKDWSKPQANRELYH) lie on the Cytoplasmic side of the membrane. The chain crosses the membrane as a helical span at residues 536 to 556 (LLYGCAGYMAYWVLMTVIYCV). At 557-583 (SGSCCKMRSQAVPQTHDITSLSVSLLV) the chain is on the extracellular side.

The protein belongs to the NodC/HAS family.

The protein localises to the membrane. This chain is Hyaluronan synthase-related protein (has-rs), found in Xenopus laevis (African clawed frog).